Consider the following 41-residue polypeptide: Phospholipase A2 homolog nigroviriditoxin acidic subunit A (41 aa).

It belongs to the phospholipase A2 family. Group II subfamily. D49 sub-subfamily. In terms of assembly, nigroviriditoxin is a heterodimer of an acidic subunit A and a basic subunit B. In terms of tissue distribution, expressed by the venom gland.

It localises to the secreted. Functionally, heterodimer A-B: Nigroviriditoxin possesses phospholipase A2 (PLA2) activity. It consists of a non-covalent association of a basic PLA2 subunit B with a non-enzymatic subunit A. Its function is as follows. Subunit A: The acidic subunit of nigroviriditoxin probably is a heterotrimer of three disulfide-linked chains generated by post-translational maturation of a PLA2-like precursor. It appears to have no PLA2 activity of its own, instead inhibiting the catalytic activity of subunit B. It is not toxic to mice by itself but increases toxicity of subunit B. This chain is Phospholipase A2 homolog nigroviriditoxin acidic subunit A, found in Bothriechis nigroviridis (Black-speckled palm pit viper).